We begin with the raw amino-acid sequence, 302 residues long: Protein KTI12 homolog (302 aa).

8–15 contacts ATP; that stretch reads GQPCSGKS. The segment at 260–273 is calmodulin-binding; that stretch reads LRRTFVKLMGQSSL.

Belongs to the KTI12 family. Interacts with the elongator complex. Binds to calmodulin in a calcium-dependent manner. In terms of tissue distribution, expressed in roots, hypocotyls, cotyledons, shoot apices, stems, inflorescence apices, leaves and flowers.

The protein resides in the cytoplasm. It localises to the nucleus. Functionally, elongator complex-associated factor that is not a structural subunit but rather transiently contacts the complex. Regulates both meristem activity and organ growth; acts as a positive regulator of adaxial leaf patterning by modulating both cell division and differentiation. Required for an early step in synthesis of 5-carbamoylmethyl (ncm5) groups present on uridines (ncm5U) at the wobble position in tRNA. This chain is Protein KTI12 homolog, found in Arabidopsis thaliana (Mouse-ear cress).